The chain runs to 106 residues: Small ribosomal subunit protein bS18 (106 aa).

Residues 1-39 (MNGRNNDMGRNGGADYDDRDFGRTPDLNADAPGRRRTGR) form a disordered region.

This sequence belongs to the bacterial ribosomal protein bS18 family. Part of the 30S ribosomal subunit. Forms a tight heterodimer with protein bS6.

Functionally, binds as a heterodimer with protein bS6 to the central domain of the 16S rRNA, where it helps stabilize the platform of the 30S subunit. This Sorangium cellulosum (strain So ce56) (Polyangium cellulosum (strain So ce56)) protein is Small ribosomal subunit protein bS18.